Consider the following 140-residue polypeptide: Translation initiation factor 2 subunit beta (140 aa).

The protein belongs to the eIF-2-beta/eIF-5 family. Heterotrimer composed of an alpha, a beta and a gamma chain.

In terms of biological role, eIF-2 functions in the early steps of protein synthesis by forming a ternary complex with GTP and initiator tRNA. This Pyrococcus abyssi (strain GE5 / Orsay) protein is Translation initiation factor 2 subunit beta (eif2b).